The primary structure comprises 158 residues: NKG2-F type II integral membrane protein (158 aa).

Polar residues predominate over residues 1–12 (MNKQRGTYSEVS). The disordered stretch occupies residues 1–25 (MNKQRGTYSEVSLAQDPKRQQRKLK). Residues 1-74 (MNKQRGTYSE…LPPPEKLTAE (74 aa)) lie on the Cytoplasmic side of the membrane. Residues 75 to 95 (VLGIICIVLMATVLKTIVLIP) form a helical; Signal-anchor for type II membrane protein membrane-spanning segment. Residues 96-158 (CIGVLEQNNF…VLRRTLICFL (63 aa)) lie on the Extracellular side of the membrane.

Can form disulfide-bonded heterodimer with CD94. Natural killer cells.

The protein resides in the membrane. In terms of biological role, may play a role as a receptor for the recognition of MHC class I HLA-E molecules by NK cells. This is NKG2-F type II integral membrane protein (KLRC4) from Homo sapiens (Human).